Consider the following 236-residue polypeptide: Ribose-5-phosphate isomerase A (236 aa).

Substrate is bound by residues 28–31, 83–86, and 96–99; these read TGST, DGAD, and KGGG. The active-site Proton acceptor is the Glu-105. Lys-123 lines the substrate pocket.

It belongs to the ribose 5-phosphate isomerase family. In terms of assembly, homodimer.

The catalysed reaction is aldehydo-D-ribose 5-phosphate = D-ribulose 5-phosphate. It functions in the pathway carbohydrate degradation; pentose phosphate pathway; D-ribose 5-phosphate from D-ribulose 5-phosphate (non-oxidative stage): step 1/1. Catalyzes the reversible conversion of ribose-5-phosphate to ribulose 5-phosphate. The sequence is that of Ribose-5-phosphate isomerase A from Methylorubrum populi (strain ATCC BAA-705 / NCIMB 13946 / BJ001) (Methylobacterium populi).